The following is a 315-amino-acid chain: Probable cell division protein WhiA (315 aa).

The segment at residues 280 to 313 is a DNA-binding region (H-T-H motif); it reads SLKELGQMLDPQVGKSGINHRLRKIEKIAEELRT.

This sequence belongs to the WhiA family.

Functionally, involved in cell division and chromosome segregation. The polypeptide is Probable cell division protein WhiA (Clostridium botulinum (strain Alaska E43 / Type E3)).